The sequence spans 181 residues: HGPRTase-like protein 2 (181 aa).

This sequence belongs to the purine/pyrimidine phosphoribosyltransferase family. Archaeal HPRT subfamily.

Its function is as follows. May catalyze a purine salvage reaction, the substrate is unknown. This chain is HGPRTase-like protein 2, found in Haloferax volcanii (strain ATCC 29605 / DSM 3757 / JCM 8879 / NBRC 14742 / NCIMB 2012 / VKM B-1768 / DS2) (Halobacterium volcanii).